We begin with the raw amino-acid sequence, 171 residues long: Co-chaperone protein HscB (171 aa).

Positions 2 to 74 (DYFTLFGLPA…LTRAEYLLSL (73 aa)) constitute a J domain.

This sequence belongs to the HscB family. As to quaternary structure, interacts with HscA and stimulates its ATPase activity. Interacts with IscU.

Co-chaperone involved in the maturation of iron-sulfur cluster-containing proteins. Seems to help targeting proteins to be folded toward HscA. The chain is Co-chaperone protein HscB from Salmonella agona (strain SL483).